The following is a 242-amino-acid chain: Venom nerve growth factor 3 (242 aa).

An N-terminal signal peptide occupies residues 1–18 (MSMLCYTLIIAFLIGIWA). The propeptide occupies 19 to 125 (APQSEDNVPL…ALNRNIQAKR (107 aa)). Residues 45–69 (HEGLKTSRNTDQRHPAPKKVDDQEP) are disordered. The span at 46–66 (EGLKTSRNTDQRHPAPKKVDD) shows a compositional bias: basic and acidic residues. Intrachain disulfides connect Cys-139–Cys-203, Cys-181–Cys-231, and Cys-191–Cys-233.

It belongs to the NGF-beta family. As to quaternary structure, homodimer; non-covalently linked. In terms of tissue distribution, expressed by the venom gland.

It localises to the secreted. In terms of biological role, nerve growth factor is important for the development and maintenance of the sympathetic and sensory nervous systems. It stimulates division and differentiation of sympathetic and embryonic sensory neurons as well as basal forebrain cholinergic neurons in the brain. Its relevance in the snake venom is not clear. However, it has been shown to inhibit metalloproteinase-dependent proteolysis of platelet glycoprotein Ib alpha, suggesting a metalloproteinase inhibition to prevent metalloprotease autodigestion and/or protection against prey proteases. Binds a lipid between the two protein chains in the homodimer. The lipid-bound form promotes histamine relase from mouse mast cells, contrary to the lipid-free form. The sequence is that of Venom nerve growth factor 3 from Pseudechis australis (Mulga snake).